A 125-amino-acid chain; its full sequence is SOSS complex subunit C homolog B (125 aa).

Disordered regions lie at residues 44–73 and 105–125; these read PAPQ…RAAF and PATP…NNPK.

The protein belongs to the SOSS-C family.

The protein is SOSS complex subunit C homolog B of Drosophila willistoni (Fruit fly).